Reading from the N-terminus, the 1052-residue chain is Carboxylic acid reductase (1052 aa).

The segment at 21-344 is adenylation (A) domain; sequence RALNEPNREW…ATEFTPFPFY (324 aa). AMP-binding positions include 334-335, threonine 339, and 419-422; these read SA and YQGR. The 84-residue stretch at 560 to 643 folds into the Carrier domain; the sequence is SSSDALIVSI…RLADYLLSIV (84 aa). An O-(pantetheine 4'-phosphoryl)serine modification is found at serine 595. Positions 684–979 are carboxylic acid reductase (R) domain; it reads GQVVVITGTT…QKIVPLDEWL (296 aa). NADP(+) is bound by residues 693–696, arginine 718, 774–776, serine 814, tyrosine 844, and lysine 848; these read TGGI and NQW.

The protein belongs to the adenylate-forming reductase family. The cofactor is Mg(2+).

It carries out the reaction an aromatic aldehyde + AMP + diphosphate + NADP(+) = an aromatic carboxylate + ATP + NADPH + H(+). The catalysed reaction is a carboxylate + ATP + NADPH + H(+) = an aldehyde + AMP + diphosphate + NADP(+). The enzyme catalyses benzoate + ATP + NADPH + H(+) = benzaldehyde + AMP + diphosphate + NADP(+). It catalyses the reaction (E)-cinnamate + ATP + NADPH + H(+) = (E)-cinnamaldehyde + AMP + diphosphate + NADP(+). It carries out the reaction piperonylate + ATP + NADPH + H(+) = piperonal + AMP + diphosphate + NADP(+). The catalysed reaction is salicylate + ATP + NADPH + H(+) = salicylaldehyde + AMP + diphosphate + NADP(+). The enzyme catalyses 3-hydroxybenzoate + ATP + NADPH + H(+) = 3-hydroxybenzaldehyde + AMP + diphosphate + NADP(+). It catalyses the reaction 2-methoxybenzoate + ATP + NADPH + H(+) = 2-methoxybenzaldehyde + AMP + diphosphate + NADP(+). It carries out the reaction 3-methoxybenzoate + ATP + NADPH + H(+) = 3-methoxybenzaldehyde + AMP + diphosphate + NADP(+). The catalysed reaction is 4-hydroxybenzoate + ATP + NADPH + H(+) = 4-hydroxybenzaldehyde + AMP + diphosphate + NADP(+). The enzyme catalyses 4-methoxybenzoate + ATP + NADPH + H(+) = 4-methoxybenzaldehyde + AMP + diphosphate + NADP(+). It catalyses the reaction 3-phenylpropanoate + ATP + NADPH + H(+) = 3-phenylpropanal + AMP + diphosphate + NADP(+). It carries out the reaction picolinate + ATP + NADPH + H(+) = picolinal + AMP + diphosphate + NADP(+). The catalysed reaction is propanoate + ATP + NADPH + H(+) = propanal + AMP + diphosphate + NADP(+). The enzyme catalyses butanoate + ATP + NADPH + H(+) = butanal + AMP + diphosphate + NADP(+). It catalyses the reaction pentanoate + ATP + NADPH + H(+) = pentanal + AMP + diphosphate + NADP(+). It carries out the reaction hexanoate + ATP + NADPH + H(+) = hexanal + AMP + diphosphate + NADP(+). The catalysed reaction is heptanoate + ATP + NADPH + H(+) = heptanal + AMP + diphosphate + NADP(+). The enzyme catalyses octanoate + ATP + NADPH + H(+) = octanal + AMP + diphosphate + NADP(+). It catalyses the reaction nonanoate + ATP + NADPH + H(+) = nonanal + AMP + diphosphate + NADP(+). Functionally, carboxylic acid reductase that shows a broad range of substrate specificity towards aromatic acids, especially to phenyl carboxylic and phenyl acrylic acids, to convert them into their respective aldehydes. Also able to use aliphatic acids as substrates. The protein is Carboxylic acid reductase of Neurospora crassa (strain ATCC 24698 / 74-OR23-1A / CBS 708.71 / DSM 1257 / FGSC 987).